Reading from the N-terminus, the 777-residue chain is Phosphoribosylformylglycinamidine synthase subunit PurL (777 aa).

H50 is a catalytic residue. Y53 and K92 together coordinate ATP. E94 lines the Mg(2+) pocket. Residues 95 to 98 (SHNH) and R117 each bind substrate. The Proton acceptor role is filled by H96. D118 serves as a coordination point for Mg(2+). Q241 provides a ligand contact to substrate. D269 serves as a coordination point for Mg(2+). Residue 313 to 315 (ESQ) coordinates substrate. ATP contacts are provided by D520 and G557. A Mg(2+)-binding site is contributed by N558. Residue S560 coordinates substrate.

This sequence belongs to the FGAMS family. In terms of assembly, monomer. Part of the FGAM synthase complex composed of 1 PurL, 1 PurQ and 2 PurS subunits.

The protein resides in the cytoplasm. It carries out the reaction N(2)-formyl-N(1)-(5-phospho-beta-D-ribosyl)glycinamide + L-glutamine + ATP + H2O = 2-formamido-N(1)-(5-O-phospho-beta-D-ribosyl)acetamidine + L-glutamate + ADP + phosphate + H(+). The protein operates within purine metabolism; IMP biosynthesis via de novo pathway; 5-amino-1-(5-phospho-D-ribosyl)imidazole from N(2)-formyl-N(1)-(5-phospho-D-ribosyl)glycinamide: step 1/2. In terms of biological role, part of the phosphoribosylformylglycinamidine synthase complex involved in the purines biosynthetic pathway. Catalyzes the ATP-dependent conversion of formylglycinamide ribonucleotide (FGAR) and glutamine to yield formylglycinamidine ribonucleotide (FGAM) and glutamate. The FGAM synthase complex is composed of three subunits. PurQ produces an ammonia molecule by converting glutamine to glutamate. PurL transfers the ammonia molecule to FGAR to form FGAM in an ATP-dependent manner. PurS interacts with PurQ and PurL and is thought to assist in the transfer of the ammonia molecule from PurQ to PurL. The sequence is that of Phosphoribosylformylglycinamidine synthase subunit PurL from Trichormus variabilis (strain ATCC 29413 / PCC 7937) (Anabaena variabilis).